A 372-amino-acid polypeptide reads, in one-letter code: Cytochrome b (372 aa).

Transmembrane regions (helical) follow at residues 32–52, 77–99, 114–134, and 180–200; these read LGFN…CLSW, FIIR…IHII, VWFF…IGYT, and LHSI…AHFF. 2 residues coordinate heme b: His-83 and His-97. Residues His-184 and His-198 each coordinate heme b. Position 203 (His-203) interacts with a ubiquinone. 4 helical membrane-spanning segments follow: residues 228 to 248, 297 to 317, 330 to 350, and 351 to 371; these read YYLR…YYIC, LLFV…LIFI, LVLF…VLCF, and PLWM…VCRL.

This sequence belongs to the cytochrome b family. In terms of assembly, the main subunits of complex b-c1 are: cytochrome b, cytochrome c1 and the Rieske protein. Requires heme b as cofactor.

Its subcellular location is the mitochondrion inner membrane. Component of the ubiquinol-cytochrome c reductase complex (complex III or cytochrome b-c1 complex) that is part of the mitochondrial respiratory chain. The b-c1 complex mediates electron transfer from ubiquinol to cytochrome c. Contributes to the generation of a proton gradient across the mitochondrial membrane that is then used for ATP synthesis. This is Cytochrome b (MT-CYB) from Trypanoplasma borreli.